The sequence spans 688 residues: DNA ligase (688 aa).

Residues 38-42 (DEEYD), 87-88 (SL), and Glu-118 each bind NAD(+). The N6-AMP-lysine intermediate role is filled by Lys-120. Arg-141, Glu-175, Lys-291, and Lys-315 together coordinate NAD(+). Zn(2+) is bound by residues Cys-409, Cys-412, Cys-428, and Cys-433. One can recognise a BRCT domain in the interval 590–679 (VKLDILRGLT…AELKGYNFDE (90 aa)).

The protein belongs to the NAD-dependent DNA ligase family. LigA subfamily. Requires Mg(2+) as cofactor. Mn(2+) serves as cofactor.

The catalysed reaction is NAD(+) + (deoxyribonucleotide)n-3'-hydroxyl + 5'-phospho-(deoxyribonucleotide)m = (deoxyribonucleotide)n+m + AMP + beta-nicotinamide D-nucleotide.. Functionally, DNA ligase that catalyzes the formation of phosphodiester linkages between 5'-phosphoryl and 3'-hydroxyl groups in double-stranded DNA using NAD as a coenzyme and as the energy source for the reaction. It is essential for DNA replication and repair of damaged DNA. The sequence is that of DNA ligase from Thermotoga maritima (strain ATCC 43589 / DSM 3109 / JCM 10099 / NBRC 100826 / MSB8).